A 461-amino-acid polypeptide reads, in one-letter code: V-type ATP synthase beta chain (461 aa).

The protein belongs to the ATPase alpha/beta chains family.

Functionally, produces ATP from ADP in the presence of a proton gradient across the membrane. The V-type beta chain is a regulatory subunit. In Clostridium botulinum (strain Kyoto / Type A2), this protein is V-type ATP synthase beta chain.